The sequence spans 269 residues: Energy-coupling factor transporter transmembrane protein EcfT (269 aa).

Transmembrane regions (helical) follow at residues 28–48, 49–69, 73–93, 109–129, and 246–266; these read MIIY…LLLL, AFTL…FNGV, IGII…GSVL, AILI…LTLT, and TLAI…KSPS.

This sequence belongs to the energy-coupling factor EcfT family. As to quaternary structure, forms a stable energy-coupling factor (ECF) transporter complex composed of 2 membrane-embedded substrate-binding proteins (S component), 2 ATP-binding proteins (A component) and 2 transmembrane proteins (T component). May be able to interact with more than 1 S component at a time.

Its subcellular location is the cell membrane. In terms of biological role, transmembrane (T) component of an energy-coupling factor (ECF) ABC-transporter complex. Unlike classic ABC transporters this ECF transporter provides the energy necessary to transport a number of different substrates. The polypeptide is Energy-coupling factor transporter transmembrane protein EcfT (Streptococcus equi subsp. equi (strain 4047)).